The sequence spans 802 residues: MKFTLSWLKDHLETDASLDEIVERLTSIGLEVEHVDDKSSLKPFVIAKVLTAVQHPDADRLRVLTVDTGDGKSPVQVVCGAPNARAGLIGAFAAPGTYVPGIDVTLTVGKIRGVESHGMMCSERELELSDEHNGIIDLPADAPVGTSFASYAHLDDPVIEINLTPNRPDATSVYGIARDLAASGLGTLKSAAVEKIPGKGETPVKVVIEAPELCPGFALRLVRGVKNGPSPKWLQQRLIAIGLRPISALVDITNYVTFDRGRPLHVFDARKVAGNLVVRRAHDGEKVMALDGREYTLTPDMCAIADDNGVESIAGVMGGEHSGCDENTTDVLIESALWDPITTARTGRTLGIITDARYRFERGVDPEFMVPGVELATRLVLDLCGGEPAETEVVGYAGHKPKIVSFPISEVTRLTGIEVPKEESLDILSRLGFKPQGSSEVVDVALPSWRPDVDGKADLVEEVMRIHGVDNIAPQPLGAHDAVNSKILTTLQVRTRTAKRALAVRGMMEAVTWSFIPAKHAELFGGGQTALKLANPIAADMSDMRPSLLPGLIAAAQRNADKGIGDVALFEVSGTYEGDGADQQRRVAAGVRRGTAKLDGSGRSWAGNSGPVGVFDAKADAIAALEACGAPVERLQIEAGGPAWYHPGRSGTIKLGPKTVLGTFGEFHPKTMEGLDVSGPLCGFEVFVDAVPEPKAKPTKTKPKLELSAFQAVKRDFAFVVDKAVEAGTLVRAALAADKKLITAVSVFDIFEGASLGADKKSIAIEVSIQPVEKTLTDEDFEALAKRVVENVGKQTGGVLRG.

The region spanning 38 to 149 (KSSLKPFVIA…ADAPVGTSFA (112 aa)) is the tRNA-binding domain. Positions 399 to 474 (HKPKIVSFPI…RIHGVDNIAP (76 aa)) constitute a B5 domain. Positions 452, 458, 461, and 462 each coordinate Mg(2+). The FDX-ACB domain occupies 708-801 (SAFQAVKRDF…VGKQTGGVLR (94 aa)).

It belongs to the phenylalanyl-tRNA synthetase beta subunit family. Type 1 subfamily. In terms of assembly, tetramer of two alpha and two beta subunits. Mg(2+) is required as a cofactor.

It localises to the cytoplasm. It catalyses the reaction tRNA(Phe) + L-phenylalanine + ATP = L-phenylalanyl-tRNA(Phe) + AMP + diphosphate + H(+). The sequence is that of Phenylalanine--tRNA ligase beta subunit from Mesorhizobium japonicum (strain LMG 29417 / CECT 9101 / MAFF 303099) (Mesorhizobium loti (strain MAFF 303099)).